The chain runs to 525 residues: Ankyrin repeat domain-containing protein SOWAHC (525 aa).

The interval 84 to 263 (CEGPSEPSGD…EESSGGGSVT (180 aa)) is disordered. The residue at position 88 (serine 88) is a Phosphoserine. Low complexity predominate over residues 101–112 (AEPEAPDGPAGP). Serine 126, serine 213, and serine 226 each carry phosphoserine. Gly residues predominate over residues 230–241 (SSGGGRGRGGGD). The segment covering 242–251 (SDSASVASSS) has biased composition (low complexity). ANK repeat units lie at residues 301–330 (TGFT…KHQL) and 340–370 (GGYT…DVDI). The segment at 434 to 525 (DGGDHHHHHH…TLRPKSNVFG (92 aa)) is disordered. Over residues 468–477 (IKPRLNKIRF) the composition is skewed to basic residues. Over residues 489–509 (RDPEQPLEGRGEEGVGEERPV) the composition is skewed to basic and acidic residues.

It belongs to the SOWAH family.

The sequence is that of Ankyrin repeat domain-containing protein SOWAHC (SOWAHC) from Homo sapiens (Human).